Reading from the N-terminus, the 198-residue chain is Imidazoleglycerol-phosphate dehydratase (198 aa).

This sequence belongs to the imidazoleglycerol-phosphate dehydratase family.

It is found in the cytoplasm. The catalysed reaction is D-erythro-1-(imidazol-4-yl)glycerol 3-phosphate = 3-(imidazol-4-yl)-2-oxopropyl phosphate + H2O. It participates in amino-acid biosynthesis; L-histidine biosynthesis; L-histidine from 5-phospho-alpha-D-ribose 1-diphosphate: step 6/9. This chain is Imidazoleglycerol-phosphate dehydratase, found in Agrobacterium fabrum (strain C58 / ATCC 33970) (Agrobacterium tumefaciens (strain C58)).